Reading from the N-terminus, the 744-residue chain is NAD(P)H-quinone oxidoreductase subunit 5, chloroplastic (744 aa).

Helical transmembrane passes span 9 to 29 (WIMPFIPLPVPMLIGVGLLLF), 41 to 61 (AFPTLFLLGLVMLLSAYFFIL), 89 to 109 (VDPLTSIMSILITTVGITVLI), 125 to 145 (FSYMTLFHVSMLGLVTSSNLI), 147 to 167 (IYICWEFVGMFSYLLIGFWFT), 185 to 205 (GDFSFLLGILGLYWITGSFEF), 219 to 239 (NEIPFFFLTLCAFLLFGGALA), 258 to 278 (TPISALIHAATMVAAGIFLVA), 280 to 300 (LLPLFIVMPYILNLISFIGII), 327 to 347 (LGYMMLALGMGSYRAALFHLI), 354 to 374 (ALLFLGAGSIIHSMEAFVGYS), 396 to 416 (TSFLLGTLSLCGIPPLACFWS), 425 to 445 (WLYSPIFAIIACSTTGFTAFY), 546 to 566 (LFPMVLLVLFTLFVGAIGIPF), 600 to 620 (FIPNATLSVSLSYFGIVIASV), and 722 to 742 (LLLYFDCVLLFLFISSFLYLF).

The protein belongs to the complex I subunit 5 family. In terms of assembly, NDH is composed of at least 16 different subunits, 5 of which are encoded in the nucleus.

Its subcellular location is the plastid. It is found in the chloroplast thylakoid membrane. It carries out the reaction a plastoquinone + NADH + (n+1) H(+)(in) = a plastoquinol + NAD(+) + n H(+)(out). It catalyses the reaction a plastoquinone + NADPH + (n+1) H(+)(in) = a plastoquinol + NADP(+) + n H(+)(out). Functionally, NDH shuttles electrons from NAD(P)H:plastoquinone, via FMN and iron-sulfur (Fe-S) centers, to quinones in the photosynthetic chain and possibly in a chloroplast respiratory chain. The immediate electron acceptor for the enzyme in this species is believed to be plastoquinone. Couples the redox reaction to proton translocation, and thus conserves the redox energy in a proton gradient. The chain is NAD(P)H-quinone oxidoreductase subunit 5, chloroplastic (ndhF) from Pelargonium hortorum (Common geranium).